We begin with the raw amino-acid sequence, 136 residues long: Large ribosomal subunit protein uL16 (136 aa).

The protein belongs to the universal ribosomal protein uL16 family. As to quaternary structure, part of the 50S ribosomal subunit.

Functionally, binds 23S rRNA and is also seen to make contacts with the A and possibly P site tRNAs. The chain is Large ribosomal subunit protein uL16 from Yersinia enterocolitica serotype O:8 / biotype 1B (strain NCTC 13174 / 8081).